Here is a 118-residue protein sequence, read N- to C-terminus: Flowering-promoting factor 1-like protein 4 (118 aa).

Belongs to the FPF1 family.

The sequence is that of Flowering-promoting factor 1-like protein 4 from Oryza sativa subsp. japonica (Rice).